A 270-amino-acid chain; its full sequence is 5'-nucleotidase SurE (270 aa).

4 residues coordinate a divalent metal cation: Asp14, Asp15, Ser46, and Asn104.

The protein belongs to the SurE nucleotidase family. It depends on a divalent metal cation as a cofactor.

It is found in the cytoplasm. The catalysed reaction is a ribonucleoside 5'-phosphate + H2O = a ribonucleoside + phosphate. Its function is as follows. Nucleotidase that shows phosphatase activity on nucleoside 5'-monophosphates. The polypeptide is 5'-nucleotidase SurE (Microcystis aeruginosa (strain NIES-843 / IAM M-2473)).